The chain runs to 280 residues: MRGAYYVAIALLIVASCSAAEVDQTEPEKVPNNGFVTSGGTVNKMLPKRVLRGSRDLKNKWAVHAGGEDRMLNRFSNENNLLEGIDQTITKAANVMGTNRDDVIVKAAEAMTNYKQLDPTLNILNSKHQLIKPRPINVYRQALLHATPNPKKSVVAVPNDVPFVLANRLEREKSTNTVNYAGRPITQHDYLPASLSFPSTSAVAPDGQFNKQLITQKALEFDLIKRPDEVKARSSKRQRTNPMLNNMDGRELHAQPNLEEPLAPVANNMPFVWATKLGEK.

The signal sequence occupies residues 1–19 (MRGAYYVAIALLIVASCSA). A RxLR-dEER motif is present at residues 49 to 70 (RVLRGSRDLKNKWAVHAGGEDR). Residues 229–249 (EVKARSSKRQRTNPMLNNMDG) are disordered.

The protein belongs to the RxLR effector family.

The protein resides in the secreted. Its subcellular location is the host nucleus. Its function is as follows. Secreted effector that completely suppresses the host cell death induced by cell death-inducing proteins. This is Secreted RxLR effector protein 39 from Plasmopara viticola (Downy mildew of grapevine).